A 124-amino-acid chain; its full sequence is Small ribosomal subunit protein uS11 (124 aa).

It belongs to the universal ribosomal protein uS11 family. Part of the 30S ribosomal subunit. Interacts with proteins S7 and S18. Binds to IF-3.

Located on the platform of the 30S subunit, it bridges several disparate RNA helices of the 16S rRNA. Forms part of the Shine-Dalgarno cleft in the 70S ribosome. This chain is Small ribosomal subunit protein uS11, found in Anaplasma marginale (strain St. Maries).